Reading from the N-terminus, the 450-residue chain is Probable glycosidase CRR1 (450 aa).

The N-terminal stretch at 1 to 17 (MSKRIIQLILLSAFARA) is a signal peptide. The 281-residue stretch at 67–347 (SPESCVPVPA…WENAPDIKAH (281 aa)) folds into the GH16 domain. Glutamate 225 (nucleophile) is an active-site residue. The active-site Proton donor is glutamate 229. Residues 428 to 450 (AQRQQHHRRSLPHVEAPPITNTM) are disordered.

This sequence belongs to the glycosyl hydrolase 16 family. CRR1 subfamily.

The protein localises to the spore wall. Functionally, spore specific glycosidase involved in spore wall assembly during sporulation. May be involved in copper import. This Eremothecium gossypii (strain ATCC 10895 / CBS 109.51 / FGSC 9923 / NRRL Y-1056) (Yeast) protein is Probable glycosidase CRR1 (CRR1).